The following is a 249-amino-acid chain: Probable septum site-determining protein MinC (249 aa).

The disordered stretch occupies residues 115-141; sequence KPAQEAPAQAEPEAAAAPEPANEPAPA. Over residues 118–141 the composition is skewed to low complexity; sequence QEAPAQAEPEAAAAPEPANEPAPA.

Belongs to the MinC family. In terms of assembly, interacts with MinD and FtsZ.

In terms of biological role, cell division inhibitor that blocks the formation of polar Z ring septums. Rapidly oscillates between the poles of the cell to destabilize FtsZ filaments that have formed before they mature into polar Z rings. Prevents FtsZ polymerization. The sequence is that of Probable septum site-determining protein MinC from Marinobacter nauticus (strain ATCC 700491 / DSM 11845 / VT8) (Marinobacter aquaeolei).